Consider the following 363-residue polypeptide: GDP-fucose transporter 1 (363 aa).

Transmembrane regions (helical) follow at residues 33–55 (FLLRALQIALVVSLYWVTSISMV), 75–97 (VTFYQCLVTSLLCKGLSTLATCC), 110–129 (LKVARSVLPLSVVFIGMITF), 139–161 (VPFYNVGRSLTTVFNVLLSYLLL), 166–184 (SFYALLTCGVIIGGFWLGI), 194–213 (SLTGTIFGVLASLCVSLNAI), 226–248 (IWRLTFYNNVNACVLFLPLMIVL), and 263–285 (AHFWLMMTLGGLFGFAIGYVTGL).

This sequence belongs to the TPT transporter family. SLC35C subfamily.

It is found in the golgi apparatus membrane. The enzyme catalyses GMP(out) + GDP-beta-L-fucose(in) = GMP(in) + GDP-beta-L-fucose(out). Antiporter specific for GDP-l-fucose and depending on the concomitant reverse transport of GMP. Involved in GDP-fucose import from the cytoplasm into the Golgi lumen. This Mus musculus (Mouse) protein is GDP-fucose transporter 1 (Slc35c1).